A 339-amino-acid polypeptide reads, in one-letter code: Phosphate acyltransferase (339 aa).

This sequence belongs to the PlsX family. In terms of assembly, homodimer. Probably interacts with PlsY.

Its subcellular location is the cytoplasm. The enzyme catalyses a fatty acyl-[ACP] + phosphate = an acyl phosphate + holo-[ACP]. The protein operates within lipid metabolism; phospholipid metabolism. Functionally, catalyzes the reversible formation of acyl-phosphate (acyl-PO(4)) from acyl-[acyl-carrier-protein] (acyl-ACP). This enzyme utilizes acyl-ACP as fatty acyl donor, but not acyl-CoA. The chain is Phosphate acyltransferase from Tolumonas auensis (strain DSM 9187 / NBRC 110442 / TA 4).